We begin with the raw amino-acid sequence, 196 residues long: Small ribosomal subunit protein uS4c (196 aa).

The disordered stretch occupies residues Leu15–Gln43. The S4 RNA-binding domain maps to Met89–Asn150.

Belongs to the universal ribosomal protein uS4 family. In terms of assembly, part of the 30S ribosomal subunit. Contacts protein S5. The interaction surface between S4 and S5 is involved in control of translational fidelity.

It localises to the plastid. The protein resides in the chloroplast. Functionally, one of the primary rRNA binding proteins, it binds directly to 16S rRNA where it nucleates assembly of the body of the 30S subunit. Its function is as follows. With S5 and S12 plays an important role in translational accuracy. The protein is Small ribosomal subunit protein uS4c (rps4) of Bothriochloa ischaemum (Yellow bluestem).